The primary structure comprises 188 residues: GTP cyclohydrolase 1 (188 aa).

Residues C76, H79, and C148 each contribute to the Zn(2+) site.

The protein belongs to the GTP cyclohydrolase I family. As to quaternary structure, homomer.

The enzyme catalyses GTP + H2O = 7,8-dihydroneopterin 3'-triphosphate + formate + H(+). It functions in the pathway cofactor biosynthesis; 7,8-dihydroneopterin triphosphate biosynthesis; 7,8-dihydroneopterin triphosphate from GTP: step 1/1. The chain is GTP cyclohydrolase 1 from Pelotomaculum thermopropionicum (strain DSM 13744 / JCM 10971 / SI).